Consider the following 358-residue polypeptide: Alanine racemase, biosynthetic (358 aa).

The active-site Proton acceptor; specific for D-alanine is the Lys34. Residue Lys34 is modified to N6-(pyridoxal phosphate)lysine. Arg130 serves as a coordination point for substrate. Tyr254 functions as the Proton acceptor; specific for L-alanine in the catalytic mechanism. Met302 contributes to the substrate binding site.

This sequence belongs to the alanine racemase family. It depends on pyridoxal 5'-phosphate as a cofactor.

It catalyses the reaction L-alanine = D-alanine. Its pathway is amino-acid biosynthesis; D-alanine biosynthesis; D-alanine from L-alanine: step 1/1. It participates in cell wall biogenesis; peptidoglycan biosynthesis. In terms of biological role, catalyzes the interconversion of L-alanine and D-alanine. Provides the D-alanine required for cell wall biosynthesis. The polypeptide is Alanine racemase, biosynthetic (alr) (Pseudomonas aeruginosa (strain ATCC 15692 / DSM 22644 / CIP 104116 / JCM 14847 / LMG 12228 / 1C / PRS 101 / PAO1)).